The sequence spans 351 residues: Fruit bromelain (351 aa).

The N-terminal stretch at 1 to 24 (MASKVQLVFLFLFLCAMWASPSAA) is a signal peptide. The propeptide at 25 to 121 (SRDEPNDPMM…VVSFDDVNIS (97 aa)) is activation peptide. N-linked (GlcNAc...) asparagine glycosylation is present at asparagine 119. 3 disulfide bridges follow: cysteine 144/cysteine 184, cysteine 178/cysteine 217, and cysteine 273/cysteine 325. Cysteine 147 is a catalytic residue. Catalysis depends on residues histidine 279 and asparagine 300.

The protein belongs to the peptidase C1 family.

The catalysed reaction is Hydrolysis of proteins with broad specificity for peptide bonds. Bz-Phe-Val-Arg-|-NHMec is a good synthetic substrate, but there is no action on Z-Arg-Arg-|-NHMec (cf. stem bromelain).. Functionally, cysteine proteinase with a high level of diversity in substrate specificity. The protein is Fruit bromelain of Ananas comosus (Pineapple).